Consider the following 158-residue polypeptide: 2-C-methyl-D-erythritol 2,4-cyclodiphosphate synthase (158 aa).

Residues aspartate 8 and histidine 10 each coordinate a divalent metal cation. 4-CDP-2-C-methyl-D-erythritol 2-phosphate contacts are provided by residues 8-10 (DVH) and 34-35 (HS). Residue histidine 42 coordinates a divalent metal cation. 4-CDP-2-C-methyl-D-erythritol 2-phosphate-binding positions include 56-58 (DIG), 61-65 (FPDTD), 100-106 (AQKPKML), 132-135 (TTEE), phenylalanine 139, and lysine 142.

It belongs to the IspF family. In terms of assembly, homotrimer. The cofactor is a divalent metal cation.

It carries out the reaction 4-CDP-2-C-methyl-D-erythritol 2-phosphate = 2-C-methyl-D-erythritol 2,4-cyclic diphosphate + CMP. Its pathway is isoprenoid biosynthesis; isopentenyl diphosphate biosynthesis via DXP pathway; isopentenyl diphosphate from 1-deoxy-D-xylulose 5-phosphate: step 4/6. Functionally, involved in the biosynthesis of isopentenyl diphosphate (IPP) and dimethylallyl diphosphate (DMAPP), two major building blocks of isoprenoid compounds. Catalyzes the conversion of 4-diphosphocytidyl-2-C-methyl-D-erythritol 2-phosphate (CDP-ME2P) to 2-C-methyl-D-erythritol 2,4-cyclodiphosphate (ME-CPP) with a corresponding release of cytidine 5-monophosphate (CMP). This chain is 2-C-methyl-D-erythritol 2,4-cyclodiphosphate synthase, found in Clostridium tetani (strain Massachusetts / E88).